The following is a 117-amino-acid chain: DNA-directed RNA polymerase subunit omega (117 aa).

The protein belongs to the RNA polymerase subunit omega family. In terms of assembly, the RNAP catalytic core consists of 2 alpha, 1 beta, 1 beta' and 1 omega subunit. When a sigma factor is associated with the core the holoenzyme is formed, which can initiate transcription.

The enzyme catalyses RNA(n) + a ribonucleoside 5'-triphosphate = RNA(n+1) + diphosphate. In terms of biological role, promotes RNA polymerase assembly. Latches the N- and C-terminal regions of the beta' subunit thereby facilitating its interaction with the beta and alpha subunits. This is DNA-directed RNA polymerase subunit omega from Ruegeria sp. (strain TM1040) (Silicibacter sp.).